A 398-amino-acid chain; its full sequence is CCA-adding enzyme (398 aa).

Positions 32 and 35 each coordinate ATP. Residues Gly32 and Arg35 each contribute to the CTP site. Mg(2+) is bound by residues Asp45 and Asp47. Residues Arg116, Asp159, Arg162, Arg165, and Arg168 each coordinate ATP. Residues Arg116, Asp159, Arg162, Arg165, and Arg168 each coordinate CTP.

Belongs to the tRNA nucleotidyltransferase/poly(A) polymerase family. Bacterial CCA-adding enzyme type 3 subfamily. As to quaternary structure, homodimer. Mg(2+) serves as cofactor.

The enzyme catalyses a tRNA precursor + 2 CTP + ATP = a tRNA with a 3' CCA end + 3 diphosphate. It catalyses the reaction a tRNA with a 3' CCA end + 2 CTP + ATP = a tRNA with a 3' CCACCA end + 3 diphosphate. Catalyzes the addition and repair of the essential 3'-terminal CCA sequence in tRNAs without using a nucleic acid template. Adds these three nucleotides in the order of C, C, and A to the tRNA nucleotide-73, using CTP and ATP as substrates and producing inorganic pyrophosphate. tRNA 3'-terminal CCA addition is required both for tRNA processing and repair. Also involved in tRNA surveillance by mediating tandem CCA addition to generate a CCACCA at the 3' terminus of unstable tRNAs. While stable tRNAs receive only 3'-terminal CCA, unstable tRNAs are marked with CCACCA and rapidly degraded. The protein is CCA-adding enzyme of Lacticaseibacillus paracasei (strain ATCC 334 / BCRC 17002 / CCUG 31169 / CIP 107868 / KCTC 3260 / NRRL B-441) (Lactobacillus paracasei).